Reading from the N-terminus, the 1465-residue chain is DNA polymerase III PolC-type (1465 aa).

Residues 427–583 (YVVFDVETTG…YDAEATGRLL (157 aa)) enclose the Exonuclease domain.

The protein belongs to the DNA polymerase type-C family. PolC subfamily.

Its subcellular location is the cytoplasm. The enzyme catalyses DNA(n) + a 2'-deoxyribonucleoside 5'-triphosphate = DNA(n+1) + diphosphate. Its function is as follows. Required for replicative DNA synthesis. This DNA polymerase also exhibits 3' to 5' exonuclease activity. The polypeptide is DNA polymerase III PolC-type (Streptococcus pyogenes serotype M4 (strain MGAS10750)).